Reading from the N-terminus, the 135-residue chain is Retinol-binding protein 1 (135 aa).

The interval 22–32 (RALDVNVALRK) is important for interaction with STRA6. Residues Lys41, Met63, and Gln109 each coordinate all-trans-retinol.

This sequence belongs to the calycin superfamily. Fatty-acid binding protein (FABP) family. In terms of assembly, interacts (only as retinol-free apoprotein) with STRA6.

It is found in the cytoplasm. The protein localises to the lipid droplet. Cytoplasmic retinol-binding protein. Accepts retinol from the transport protein STRA6, and thereby contributes to retinol uptake, storage and retinoid homeostasis. In Rattus norvegicus (Rat), this protein is Retinol-binding protein 1 (Rbp1).